The primary structure comprises 465 residues: RuvB-like helicase 2 (465 aa).

Gly-72–Thr-79 is a binding site for ATP.

It belongs to the RuvB family. In terms of assembly, may form heterododecamers with RVB1. Component of the SWR1 chromatin remodeling complex, the INO80 chromatin remodeling complex, and of the R2TP complex. Interacts with dil1.

It localises to the nucleus. The enzyme catalyses ATP + H2O = ADP + phosphate + H(+). Its function is as follows. DNA helicase which participates in several chromatin remodeling complexes, including the SWR1 and the INO80 complexes. The SWR1 complex mediates the ATP-dependent exchange of histone H2A for the H2A variant HZT1 leading to transcriptional regulation of selected genes by chromatin remodeling. The INO80 complex remodels chromatin by shifting nucleosomes and is involved in DNA repair. Also involved in pre-rRNA processing. This Schizosaccharomyces pombe (strain 972 / ATCC 24843) (Fission yeast) protein is RuvB-like helicase 2 (rvb2).